The primary structure comprises 259 residues: MKVLLTNDDGIYAPGIFAMAKEIASRDEFEAVVVAPDREQSATGHAITVHKPLRVNNVKKLGEKLEIPFYSVNGTPSDCVKLAVESVMDEKPDLVISGINRGANLGTDVLYSGTVSGAMEAAILNIKSIAVSLVDYDYEDYSTAASYTAYIANIIKDNPEEFENGTLLNVNVPAVEANQLKGVKITRQGFRQYENIFEKRFDPRGKAYYWMAGKVIEDTSDIKTDVASVKENYVSVTPIKYDLTDYNLYNSLSNWEFDD.

A divalent metal cation is bound by residues D8, D9, S41, and N100.

The protein belongs to the SurE nucleotidase family. A divalent metal cation serves as cofactor.

The protein localises to the cytoplasm. It carries out the reaction a ribonucleoside 5'-phosphate + H2O = a ribonucleoside + phosphate. Functionally, nucleotidase that shows phosphatase activity on nucleoside 5'-monophosphates. This Natranaerobius thermophilus (strain ATCC BAA-1301 / DSM 18059 / JW/NM-WN-LF) protein is 5'-nucleotidase SurE.